Reading from the N-terminus, the 148-residue chain is uncharacterized protein (148 aa).

Residues 1 to 35 (MRCVTRTRNWWRRAARMPRAGSSAWWVAVCKQVCT) form the signal peptide.

It is found in the secreted. This is an uncharacterized protein from Homo sapiens (Human).